The primary structure comprises 343 residues: DNA-directed RNA polymerase subunit alpha (343 aa).

The segment at 1–239 (MGETVTIQKN…DQLNVFVNFE (239 aa)) is alpha N-terminal domain (alpha-NTD). Residues 255-343 (FNPAFLKKVD…ELAKRFEDHY (89 aa)) form an alpha C-terminal domain (alpha-CTD) region.

This sequence belongs to the RNA polymerase alpha chain family. As to quaternary structure, homodimer. The RNAP catalytic core consists of 2 alpha, 1 beta, 1 beta' and 1 omega subunit. When a sigma factor is associated with the core the holoenzyme is formed, which can initiate transcription.

It carries out the reaction RNA(n) + a ribonucleoside 5'-triphosphate = RNA(n+1) + diphosphate. Its function is as follows. DNA-dependent RNA polymerase catalyzes the transcription of DNA into RNA using the four ribonucleoside triphosphates as substrates. The chain is DNA-directed RNA polymerase subunit alpha from Bradyrhizobium sp. (strain BTAi1 / ATCC BAA-1182).